A 365-amino-acid chain; its full sequence is uncharacterized protein (365 aa).

3 helical membrane passes run 105–125 (TGNW…QCWL), 151–171 (ILTT…SLTI), and 187–207 (IFLI…SLIF).

Its subcellular location is the cell membrane. This is an uncharacterized protein from Mycoplasma genitalium (strain ATCC 33530 / DSM 19775 / NCTC 10195 / G37) (Mycoplasmoides genitalium).